Here is a 240-residue protein sequence, read N- to C-terminus: Cysteine-rich venom protein (240 aa).

Residues 1 to 19 (MIAFIVLPILAAVLHQSSG) form the signal peptide. The SCP domain maps to 39 to 166 (DLHNSLRRSV…KYRYFYVCQY (128 aa)). 8 cysteine pairs are disulfide-bonded: Cys-75-Cys-153, Cys-92-Cys-167, Cys-148-Cys-164, Cys-186-Cys-193, Cys-189-Cys-198, Cys-202-Cys-235, Cys-211-Cys-229, and Cys-220-Cys-233. The 34-residue stretch at 202–235 (CTQENTYSNCNSLVQQSSCQDNNMKTKCPASCFC) folds into the ShKT domain.

The protein belongs to the CRISP family. In terms of tissue distribution, expressed by the venom gland.

It is found in the secreted. May block ryanodine receptors (RYR). The polypeptide is Cysteine-rich venom protein (Protobothrops mucrosquamatus (Taiwan habu)).